We begin with the raw amino-acid sequence, 663 residues long: UvrABC system protein B (663 aa).

The Helicase ATP-binding domain maps to 31–271; the sequence is DNIESGEKAQ…EQSISKIQAE (241 aa). Position 44–51 (44–51) interacts with ATP; it reads GATGTGKT. The Beta-hairpin motif lies at 97–120; sequence YYDYYQPEAYVPSSDTYIEKDSSV. The Helicase C-terminal domain occupies 435-601; that stretch reads QMDDLLGEIN…TIKKDIRDLI (167 aa). The region spanning 627-662 is the UVR domain; it reads QEAIKQLQKNMQEAAELLDFELAAQLRDLILELKAI.

This sequence belongs to the UvrB family. As to quaternary structure, forms a heterotetramer with UvrA during the search for lesions. Interacts with UvrC in an incision complex.

Its subcellular location is the cytoplasm. The UvrABC repair system catalyzes the recognition and processing of DNA lesions. A damage recognition complex composed of 2 UvrA and 2 UvrB subunits scans DNA for abnormalities. Upon binding of the UvrA(2)B(2) complex to a putative damaged site, the DNA wraps around one UvrB monomer. DNA wrap is dependent on ATP binding by UvrB and probably causes local melting of the DNA helix, facilitating insertion of UvrB beta-hairpin between the DNA strands. Then UvrB probes one DNA strand for the presence of a lesion. If a lesion is found the UvrA subunits dissociate and the UvrB-DNA preincision complex is formed. This complex is subsequently bound by UvrC and the second UvrB is released. If no lesion is found, the DNA wraps around the other UvrB subunit that will check the other stand for damage. The sequence is that of UvrABC system protein B from Streptococcus equi subsp. zooepidemicus (strain MGCS10565).